A 135-amino-acid chain; its full sequence is Bacilliredoxin CHU_0972 (135 aa).

Belongs to the bacilliredoxin family.

The protein is Bacilliredoxin CHU_0972 of Cytophaga hutchinsonii (strain ATCC 33406 / DSM 1761 / CIP 103989 / NBRC 15051 / NCIMB 9469 / D465).